The primary structure comprises 447 residues: Probable glycine dehydrogenase (decarboxylating) subunit 1 (447 aa).

This sequence belongs to the GcvP family. N-terminal subunit subfamily. In terms of assembly, the glycine cleavage system is composed of four proteins: P, T, L and H. In this organism, the P 'protein' is a heterodimer of two subunits.

It carries out the reaction N(6)-[(R)-lipoyl]-L-lysyl-[glycine-cleavage complex H protein] + glycine + H(+) = N(6)-[(R)-S(8)-aminomethyldihydrolipoyl]-L-lysyl-[glycine-cleavage complex H protein] + CO2. Functionally, the glycine cleavage system catalyzes the degradation of glycine. The P protein binds the alpha-amino group of glycine through its pyridoxal phosphate cofactor; CO(2) is released and the remaining methylamine moiety is then transferred to the lipoamide cofactor of the H protein. The protein is Probable glycine dehydrogenase (decarboxylating) subunit 1 of Bacillus anthracis (strain A0248).